The following is a 600-amino-acid chain: NADH-quinone oxidoreductase subunit C/D (600 aa).

Positions 1–190 are NADH dehydrogenase I subunit C; sequence MVNNMTDLTA…DPFELTKAKQ (190 aa). Residues 214–600 are NADH dehydrogenase I subunit D; that stretch reads DFMFLNLGPN…IDFVMSDVDR (387 aa).

In the N-terminal section; belongs to the complex I 30 kDa subunit family. It in the C-terminal section; belongs to the complex I 49 kDa subunit family. NDH-1 is composed of 13 different subunits. Subunits NuoB, CD, E, F, and G constitute the peripheral sector of the complex.

Its subcellular location is the cell inner membrane. It carries out the reaction a quinone + NADH + 5 H(+)(in) = a quinol + NAD(+) + 4 H(+)(out). NDH-1 shuttles electrons from NADH, via FMN and iron-sulfur (Fe-S) centers, to quinones in the respiratory chain. The immediate electron acceptor for the enzyme in this species is believed to be ubiquinone. Couples the redox reaction to proton translocation (for every two electrons transferred, four hydrogen ions are translocated across the cytoplasmic membrane), and thus conserves the redox energy in a proton gradient. This Salmonella paratyphi C (strain RKS4594) protein is NADH-quinone oxidoreductase subunit C/D.